Reading from the N-terminus, the 524-residue chain is Rho guanine nucleotide exchange factor 3 (524 aa).

Positions 75–98 are disordered; that stretch reads SDSRPDLFSPRPWSRNTPAANTKR. Residues 121–303 enclose the DH domain; that stretch reads IKRQEAIFEL…IQGIVAEINI (183 aa). Residues 290–448 enclose the PH domain; the sequence is AINIIQGIVA…QWLNCIRQAK (159 aa).

Its subcellular location is the cytoplasm. In terms of biological role, acts as a guanine nucleotide exchange factor (GEF) for RhoA and RhoB GTPases. This chain is Rho guanine nucleotide exchange factor 3 (Arhgef3), found in Gallus gallus (Chicken).